A 490-amino-acid chain; its full sequence is Betaine aldehyde dehydrogenase (490 aa).

Residue aspartate 93 participates in K(+) binding. 150–152 (GAW) is a binding site for NAD(+). Lysine 162 (charge relay system) is an active-site residue. 176 to 179 (KPSE) contacts NAD(+). Valine 180 is a K(+) binding site. NAD(+) is bound at residue 230-233 (GIAS). Leucine 246 is a binding site for K(+). Glutamate 252 (proton acceptor) is an active-site residue. Glycine 254, cysteine 286, and glutamate 387 together coordinate NAD(+). Cysteine 286 (nucleophile) is an active-site residue. The residue at position 286 (cysteine 286) is a Cysteine sulfenic acid (-SOH). Residues lysine 457 and glycine 460 each contribute to the K(+) site. The active-site Charge relay system is glutamate 464.

Belongs to the aldehyde dehydrogenase family. In terms of assembly, dimer of dimers. It depends on K(+) as a cofactor.

The catalysed reaction is betaine aldehyde + NAD(+) + H2O = glycine betaine + NADH + 2 H(+). It functions in the pathway amine and polyamine biosynthesis; betaine biosynthesis via choline pathway; betaine from betaine aldehyde: step 1/1. Its function is as follows. Involved in the biosynthesis of the osmoprotectant glycine betaine. Catalyzes the irreversible oxidation of betaine aldehyde to the corresponding acid. This Yersinia pseudotuberculosis serotype O:1b (strain IP 31758) protein is Betaine aldehyde dehydrogenase.